Consider the following 1416-residue polypeptide: MKDLVKFLKAQSKTSEDFDVIKIGLASPDMIRSWSFGEVKKPETINYRTFKPERDGLFCARIFGPVKDYECLCGKYKRLKHRGVICEKCGVEVTQTKVRRERMGHIELASPVAHIWFLKSLPSRIGLLLDMPLRDIERVLYFEMYIVTEPGMTDLERGQLLTEEQYLDAEDRWQDEFEAKMGAEAIQDLLKGMDLEAECEKLREELQETNSETKRKKITKRLKLLEAFVQSGNKPEWMVMTVLPVLPPDLRPLVPLDGGRFATSDLNDLYRRVINRNNRLKRLLDLIAPDIIVRNEKRMLQESVDALLDNGRRGRAITGSNRRPLKSLADMIKGKQGRFRQNLLGKRVDYSGRSVITVGPYLHLHQCGLPKKMALELFRPFIYAKLESRGYATTIKAAKKMVEREEAIVWDILAEVIREHPILLNRAPTLHRLGIQAFEPILIEGKAIQLHPLVCAAFNADFDGDQMAVHVPLTLEAQLEARALMMSTNNVLSPANGDPIIVPSQDVVLGLYYMTREKVNGKGEGMLLQDPREAEKAYRTGEAELHSRVKVRITEYVKNEAGEFDAKTTLTDTTIGRAILWMIAPKGMPYSLFNQTLGKKAISKLINEAYRRLGLKEAVMFADQIMYTGFAYAARSGSSVGIDDMEIPAKKYEIISAAEEEVAEIQEQFQSGLVTAGERYNKVIDIWAAANERVAKAMMENLSQEEVINREGNPEKQASFNSIFMMADSGARGSAAQIRQLAGMRGLMARPDGSIIETPITANFREGLNVLQYFISTHGARKGLADTALKTANSGYLTRRLVDVAQDLVIVEDDCGTHEGLVMTPLIEGGDEKVPLRELVLGRVAAEDILKPGAEEVLIPRNTLLDEKLCDVLDANSVDSVKVRSVVTCDTDFGVCAKCYGRDLARGHLINQGEAVGVIAAQSIGEPGTQLTMRTFHIGGAASAAAKESSVQVKNTGTVHLMNAKFVTNDESKLVLTSRNTELTITDAFGRTKEHYKVPYGAVLSKGDGQEVTAGETIANWDPHTMPVVSEVSGFVKFVDIIDGLTVTRQTDELTGLSSIVVQDVGERATAGKDLRPTIKLVDANGNDIFLPETDVLAQYFLPGKAIVSLDDGAAVKVGEPLARIPQESVGTKDITGGLPRVADLFEARKPKEPAILAEISGIVSFGKETKGKRRLLITPAEGETYEEMIPKWRQLNVFEGEMVQRGDVISDGAETPHDILRLRGVRAVTEYIVNEVQDVYRLQGVKINDKHIEVIVRQMLRKAVITKAYDSEFLEGEQVEVARVKIVNRQREAEGKPPVEFERELLGITKASLATESFISAASFQETTRVLTEAAVAGKRDELRGLKENVIVGRLIPAGTGFAYHQNRHKHRLVDDVVAKLSEEDEAAIADEFVMTADDASANLAEMLNMADDAE.

Zn(2+)-binding residues include cysteine 71, cysteine 73, cysteine 86, and cysteine 89. Residues aspartate 461, aspartate 463, and aspartate 465 each coordinate Mg(2+). Zn(2+) is bound by residues cysteine 815, cysteine 889, cysteine 896, and cysteine 899.

This sequence belongs to the RNA polymerase beta' chain family. In terms of assembly, the RNAP catalytic core consists of 2 alpha, 1 beta, 1 beta' and 1 omega subunit. When a sigma factor is associated with the core the holoenzyme is formed, which can initiate transcription. Mg(2+) is required as a cofactor. Requires Zn(2+) as cofactor.

The catalysed reaction is RNA(n) + a ribonucleoside 5'-triphosphate = RNA(n+1) + diphosphate. In terms of biological role, DNA-dependent RNA polymerase catalyzes the transcription of DNA into RNA using the four ribonucleoside triphosphates as substrates. In Haemophilus influenzae (strain 86-028NP), this protein is DNA-directed RNA polymerase subunit beta'.